The sequence spans 414 residues: MTPPILIIGAGLSGLTVSRILTNASIPNIVFEASTPDRSQGYAISLRDWGYTSLLTALGDLPLRSLTRGVAPDRILGGTGWIDQALRDNHTGNLLVAPDPEAKQCIVRANRNALRTWIADSGDEEVDIRYGHRLRSVQGSMGNVTATFENGAKYQGSLVIAADGVHSSVRSQILPHVSPDIVPVVVYHGELELPRKEFDNLIRPHSGPSNILAGVGDGFNTPITVCNITPTHVHLDWSYSRPSTENKENKDPLYRPHVSAAEAKQIPPALLEEIASRDLARPWSQLLNAEALPTHRVFNWVSRCVSVTREDVNAAQKQGVVFIGDSWHAMPIFGGEGGNHALVDAVELAEALTGKEGNLDAAVTGYYDRAWRRCQEAVRRSRQRFFQLHRPMREWMEIAEKKKMMAAMKGVEAH.

Residues E32, A43, R115, D325, and G338 each contribute to the FAD site.

This sequence belongs to the paxM FAD-dependent monooxygenase family. Requires FAD as cofactor.

The catalysed reaction is 3-(2,4-dioxopentyl)-3,6,8,9-tetrahydroxy-1-oxo-1,2,3,4-tetrahydroanthracene-2-carboxyl-[ACP] + NADPH + O2 + H(+) = 3-(2,4-dioxopentyl)-2,3,6,8,9-pentahydroxy-1-oxo-1,2,3,4-tetrahydroanthracene-2-carboxyl-[ACP] + NADP(+) + H2O. Its pathway is secondary metabolite biosynthesis. Its function is as follows. FAD-dependent monooxygenase; part of the gene cluster that mediates the biosynthesis of the linear tetracyclic TAN-1612 neuropeptide Y receptor antagonist. The decaketide backbone of TAN-1612 is synthesized by the non-reducing polyketide synthase adaA via condensation of one acetyl-CoA starter unit with 9 malonyl-CoA units. The FAD-dependent monooxygenase adaC then performs hydroxylation at C2 while the polaketide chain is still attached to the NRPKS adaA. The alpha-hydroxylation step at C2 appears to be crucial for the following C18-C1 Claisen cyclization and release of the C9-hydroxyl version of TAN-1612 from the NRPKS adaA, two steps performed by the lactamase-like protein adaB. Finally, the O-methyltransferase adaD performs the C9 O-methylation to complete the biosynthesis of TAN-1612. The polypeptide is FAD-dependent monooxygenase adaC (Aspergillus niger (strain ATCC MYA-4892 / CBS 513.88 / FGSC A1513)).